The sequence spans 293 residues: MVAEIFNHDICENNVVISPRSETAQDNEGLFGRIGTLETRLARNEREIDAAQSVRYRVFVEEMKARLPAEAMRRKRDFDAWDSVCDHLLVLDKSIEGDSEDQIVGTYRLLRQETALANNGFYSASEFDIAGLVARHPGKRFMELGRSCVLPEYRTKRTVELLWQGNWAYAVKHRMDAMIGCASFPGVQPEAHALALSFLHHNCLAKGEWEAVALPELYHEMDLVPVEALNTRKALNAMPPLIKGYMRLGAMFGSGAVVDHAFNTTDVLVVLPVSSIAGRYISYYGGEAERING.

Belongs to the acetyltransferase family. OlsB subfamily.

It catalyses the reaction a (3R)-hydroxyacyl-[ACP] + L-ornithine = a lyso-ornithine lipid + holo-[ACP] + H(+). Its pathway is lipid metabolism. Catalyzes the first step in the biosynthesis of ornithine lipids, which are phosphorus-free membrane lipids. Catalyzes the 3-hydroxyacyl-acyl carrier protein-dependent acylation of ornithine to form lyso-ornithine lipid (LOL). This is L-ornithine N(alpha)-acyltransferase from Agrobacterium fabrum (strain C58 / ATCC 33970) (Agrobacterium tumefaciens (strain C58)).